Here is a 118-residue protein sequence, read N- to C-terminus: Large ribosomal subunit protein uL18 (118 aa).

It belongs to the universal ribosomal protein uL18 family. In terms of assembly, part of the 50S ribosomal subunit; part of the 5S rRNA/L5/L18/L25 subcomplex. Contacts the 5S and 23S rRNAs.

In terms of biological role, this is one of the proteins that bind and probably mediate the attachment of the 5S RNA into the large ribosomal subunit, where it forms part of the central protuberance. In Phenylobacterium zucineum (strain HLK1), this protein is Large ribosomal subunit protein uL18.